The primary structure comprises 486 residues: Ribulose bisphosphate carboxylase large chain (486 aa).

Residues asparagine 125 and threonine 175 each contribute to the substrate site. Lysine 177 serves as the catalytic Proton acceptor. Lysine 179 contributes to the substrate binding site. Mg(2+) contacts are provided by lysine 203, aspartate 205, and glutamate 206. The residue at position 203 (lysine 203) is an N6-carboxylysine. The active-site Proton acceptor is histidine 295. Substrate-binding residues include arginine 296, histidine 328, and serine 380.

The protein belongs to the RuBisCO large chain family. Type I subfamily. Heterohexadecamer of 8 large chains and 8 small chains. Mg(2+) is required as a cofactor.

It carries out the reaction 2 (2R)-3-phosphoglycerate + 2 H(+) = D-ribulose 1,5-bisphosphate + CO2 + H2O. The enzyme catalyses D-ribulose 1,5-bisphosphate + O2 = 2-phosphoglycolate + (2R)-3-phosphoglycerate + 2 H(+). In terms of biological role, ruBisCO catalyzes two reactions: the carboxylation of D-ribulose 1,5-bisphosphate, the primary event in carbon dioxide fixation, as well as the oxidative fragmentation of the pentose substrate. Both reactions occur simultaneously and in competition at the same active site. This is Ribulose bisphosphate carboxylase large chain from Bradyrhizobium diazoefficiens (strain JCM 10833 / BCRC 13528 / IAM 13628 / NBRC 14792 / USDA 110).